The chain runs to 312 residues: Olfactory receptor 2C1 (312 aa).

The Extracellular segment spans residues 1-24 (MEVDSNSSSGSFILMGVSDHPHLE). Asn-6 carries an N-linked (GlcNAc...) asparagine glycan. A helical transmembrane segment spans residues 25–48 (IIFFAVILASYLLTLVGNLTIILL). Residues 49 to 57 (SRLDARLHT) lie on the Cytoplasmic side of the membrane. The helical transmembrane segment at 58–79 (PMYFFLSNLSSLDLAFTTSSVP) threads the bilayer. Residues 80 to 100 (QMLKNLWGPDKTISYGGCVTQ) lie on the Extracellular side of the membrane. A disulfide bridge links Cys-97 with Cys-189. The chain crosses the membrane as a helical span at residues 101-120 (LYVFLWLGATECILLVVMAF). The Cytoplasmic segment spans residues 121-139 (DRYVAVCRPLHYMTVMNPR). The helical transmembrane segment at 140–160 (LCWGLAAISWLGGLGNSVIQS) threads the bilayer. Residues 161 to 200 (TFTLQLPFCGHRKVDNFLCEVPAMIKLACGDTSLNEAVLN) lie on the Extracellular side of the membrane. A helical membrane pass occupies residues 201–222 (GVCTFFTVVPVSVILVSYCFIA). At 223–236 (QAVMKIRSVEGRRK) the chain is on the cytoplasmic side. Residues 237-261 (AFNTCVSHLVVVFLFYGSAIYGYLL) traverse the membrane as a helical segment. Residues 262-272 (PAKSSNQSQGK) lie on the Extracellular side of the membrane. Residues 273-292 (FISLFYSVVTPMVNPLIYTL) traverse the membrane as a helical segment. Over 293-312 (RNKEVKGALGRLLGKGRGAS) the chain is Cytoplasmic.

It belongs to the G-protein coupled receptor 1 family. In terms of tissue distribution, olfactory epithelium. Present in various subcellular compartments of the olfactory sensory neurons, particularly in the axonal processes and neve terminals.

The protein resides in the cell membrane. Its function is as follows. Olfactory receptor that is activated by the binding of organosulfur odorants with thioether groups such as (methylthio)methanetiol (MTMT). Also binds odorants acetophenone and benzaldehyde. The activity of this receptor is mediated by G proteins which activate adenylyl cyclase. May be involved in the molecular processes underlying fasciculation and targeting of olfactory axons. The polypeptide is Olfactory receptor 2C1 (Mus musculus (Mouse)).